A 258-amino-acid polypeptide reads, in one-letter code: MKALISNDDGVNATGILAAKNAIEDLCEVCVVAPETQQSGIGHAITLYDPLRINPTTLRDKSQAYGVTGTPTDAVTFGLFEIMGEKPDIMISGINTGFNIGKAELTTSGTIGAALEAASFGIPSIAISQEVTRDYIKFENGTVDIDFSFAGKMLRKLVKIVFKKGLPDGIDLLNVNIPENPVDEEFEVAKLGNRMYTPIIQRRLDPRGKPYYWIGGDPYNSDCEGTDGHCLKKLNKATITPLTIDLTGEMDLIKEWLK.

The a divalent metal cation site is built by D8, D9, S39, and N95.

The protein belongs to the SurE nucleotidase family. The cofactor is a divalent metal cation.

The protein localises to the cytoplasm. It carries out the reaction a ribonucleoside 5'-phosphate + H2O = a ribonucleoside + phosphate. Nucleotidase that shows phosphatase activity on nucleoside 5'-monophosphates. The protein is 5'-nucleotidase SurE of Methanobrevibacter smithii (strain ATCC 35061 / DSM 861 / OCM 144 / PS).